The chain runs to 382 residues: Mannitol-1-phosphate 5-dehydrogenase (382 aa).

Residue 3–14 participates in NAD(+) binding; sequence ALHFGAGNIGRG.

Belongs to the mannitol dehydrogenase family.

It carries out the reaction D-mannitol 1-phosphate + NAD(+) = beta-D-fructose 6-phosphate + NADH + H(+). The sequence is that of Mannitol-1-phosphate 5-dehydrogenase from Erwinia tasmaniensis (strain DSM 17950 / CFBP 7177 / CIP 109463 / NCPPB 4357 / Et1/99).